We begin with the raw amino-acid sequence, 296 residues long: MAATAEVGVTATLGAAARAVATRQGLLNDPYAEPLLGAVGIDYLTRAIADHTFAADESPVGDDPAVTSLLDALAAHTRFVDEFLAEAGRAGIRQVVILASGLDTRPYRLWWPRGTTVYEIDRPRVLDFKAGVLRGLDARLATNRCAVGIDLRDDWPAALRRVGFDAAQPTAWVAEQLLVGYLKPAEQNRLLRRLTAASAAGSRLAADHLPTWDPLQLEAERAFVEGWRRRGLDIDLASLTHLGEYHYVPEYLATHGWEPAARSIADLLGGLGLGPRRGAGSGGAQFIPEYVTATRV.

S-adenosyl-L-methionine is bound by residues aspartate 121 and 150-151 (DL).

This sequence belongs to the UPF0677 family.

In terms of biological role, exhibits S-adenosyl-L-methionine-dependent methyltransferase activity. The protein is Putative S-adenosyl-L-methionine-dependent methyltransferase MAP_3881 of Mycolicibacterium paratuberculosis (strain ATCC BAA-968 / K-10) (Mycobacterium paratuberculosis).